Consider the following 125-residue polypeptide: Small ribosomal subunit protein bS6 (125 aa).

The segment at 99–125 (PSIMMKSVEREEARKASTEASAPAQAQ) is disordered. Over residues 105–115 (SVEREEARKAS) the composition is skewed to basic and acidic residues. Positions 116 to 125 (TEASAPAQAQ) are enriched in polar residues.

This sequence belongs to the bacterial ribosomal protein bS6 family.

Functionally, binds together with bS18 to 16S ribosomal RNA. The sequence is that of Small ribosomal subunit protein bS6 from Bordetella petrii (strain ATCC BAA-461 / DSM 12804 / CCUG 43448).